The chain runs to 1330 residues: MVGGGSAQKLTTNDALAYLKAVKDKFQDQRGKYDEFLEVMKNFKSQRVDTAGVITRVKELFKGHQELILGFNTFLPKGFEITLQPEDGQPPLKKRVEFEEAISFVNKIKTRFQGDDRVYKSFLDILNMYRRDSKSITEVYQEVAILFRDHSDLLVEFTHFLPDTSATASIPSVKTSVRERGVSLADKKDRIITPHPDHDYGTEHIDQDRERPIKKENKEHMRGTNKENEHRDARDFEPHSKKEQFLNKKQKLHIRGDDPAEISNQSKLSGAVPSSSTYDEKGAMKSYSQDLAIVDRVKEKLNASEYQEFLRCLNLFSKEIISRPELQSLVGNLIGVYPDLMDSFIEFLVQCEKNEGLLSGILTKSKSTYLLQGEGKYPQPSLDNDRDQEHKRDDGLRDRDHEKERLEKAAANLKWAKPISELDLSNCEQCTPSYRLLPKNYPISIASQKTEIGKLVLNDHWVSVTSGSEDYSFSHMRKNQYEESLFKCEDDRFELDMLLESVNSTTKHVEELLTKINSNELKTNSPIRVEDHLTALNLRCIERLYGDHGLDVMDVLKKNVSLALPVILTRLKQKQEEWARCRSDFDKVWAEIYAKNYYKSLDHRSFYFKQQDSKKLSMKALLAEIKEITEKKREDDSLLAFAAGNRLSISPDLEFDYPDHDLHEDLYQLIKYSCAEMCSTEQLDKVMKIWTTFVEQIFGVPSRPQGAEDQEDVVKSMNQNVKSGSSSAGESEGSPHNYASVADSRRSKSSRKANEHSQLGQTSNSERDGAAGRTSDALCETAQHEKMLKNVVTSDEKPESKQAVSIERAHDSTALAVDGLLDQSNGGSSIVHMTGHCNNNLKPVTCGTELELKMNDGNGPKLEVGNKKLLTNGIAVEITSDQEMAGTSKVEREEGELSPNGDFEEDNFAVYAKTDFETFSKANDSTGNNISGDRSREGEPSCLETRAENDAEGDENAARSSEDSRNEYENGDVSGTESGGGEDPEDDLDNNNKGESEGEAECMADAHDAEENGSALPVSARFLLHVKPLVKYVPSAIALHDKDKDSLKNSQVFYGNDSFYVLFRLHRILYERILSAKVNSSSPEGKWRTSNTKNPTDSYARFMTALYNLLDGTSDNAKFEDDCRAIIGTQSYILFTLDKLIHKFIKHLQVVVADEMDNKLLQLYFYEKSRRPETIFDAVYYDNTRVLLPDENIYRIECRLSTPAKLSIQLMCNGLDKPDVTSVSIDPTFAAYLHNDFLSIQPNAREDRRIYLNRNKRKVCREDEQLYSTDEVKIKNGLECKIACGSSKVSYVLETEDLLVRVKKRRKTLCHNQDSWVRQMRLQYYKNNFL.

PAH domains follow at residues 8–78 and 94–164; these read QKLT…LPKG and KRVE…LPDT. Residues 191 to 246 are compositionally biased toward basic and acidic residues; the sequence is IITPHPDHDYGTEHIDQDRERPIKKENKEHMRGTNKENEHRDARDFEPHSKKEQFL. The disordered stretch occupies residues 191–281; that stretch reads IITPHPDHDY…VPSSSTYDEK (91 aa). Residues 262–277 show a composition bias toward polar residues; sequence ISNQSKLSGAVPSSST. In terms of domain architecture, PAH 3 spans 283-351; it reads AMKSYSQDLA…DSFIEFLVQC (69 aa). 5 disordered regions span residues 373–401, 718–775, 789–808, 882–906, and 920–1002; these read GEGK…DRDH, NQNV…GRTS, KNVV…SIER, QEMA…FEED, and SKAN…EAEC. The segment covering 383 to 401 has biased composition (basic and acidic residues); the sequence is DNDRDQEHKRDDGLRDRDH. Positions 723 to 734 are enriched in low complexity; that stretch reads SGSSSAGESEGS. Basic and acidic residues predominate over residues 789–800; the sequence is KNVVTSDEKPES. Over residues 920-932 the composition is skewed to polar residues; it reads SKANDSTGNNISG. 2 stretches are compositionally biased toward basic and acidic residues: residues 933-949 and 956-968; these read DRSR…RAEN and NAAR…RNEY. Positions 980–989 are enriched in acidic residues; that stretch reads GGEDPEDDLD. Residue serine 996 is modified to Phosphoserine.

As to quaternary structure, interacts with ERF7 and the histone deacetylase HDA19.

It localises to the nucleus. Its function is as follows. Acts as a transcriptional repressor. Interacts with ERF7 to repress genes in abscisic acid and drought stress responses. The heterodimer represses transcription by tethering SNL3 to DNA. In Arabidopsis thaliana (Mouse-ear cress), this protein is Paired amphipathic helix protein Sin3-like 3 (SNL3).